The following is a 249-amino-acid chain: Pyridoxine 5'-phosphate synthase (249 aa).

Residue N12 coordinates 3-amino-2-oxopropyl phosphate. 1-deoxy-D-xylulose 5-phosphate is bound at residue 14–15 (DH). Position 23 (R23) interacts with 3-amino-2-oxopropyl phosphate. H48 functions as the Proton acceptor in the catalytic mechanism. R50 and H55 together coordinate 1-deoxy-D-xylulose 5-phosphate. The active-site Proton acceptor is the E75. 1-deoxy-D-xylulose 5-phosphate is bound at residue T105. H199 serves as the catalytic Proton donor. 3-amino-2-oxopropyl phosphate is bound by residues G200 and 221-222 (GH).

The protein belongs to the PNP synthase family. Homooctamer; tetramer of dimers.

The protein localises to the cytoplasm. The catalysed reaction is 3-amino-2-oxopropyl phosphate + 1-deoxy-D-xylulose 5-phosphate = pyridoxine 5'-phosphate + phosphate + 2 H2O + H(+). It participates in cofactor biosynthesis; pyridoxine 5'-phosphate biosynthesis; pyridoxine 5'-phosphate from D-erythrose 4-phosphate: step 5/5. In terms of biological role, catalyzes the complicated ring closure reaction between the two acyclic compounds 1-deoxy-D-xylulose-5-phosphate (DXP) and 3-amino-2-oxopropyl phosphate (1-amino-acetone-3-phosphate or AAP) to form pyridoxine 5'-phosphate (PNP) and inorganic phosphate. The polypeptide is Pyridoxine 5'-phosphate synthase (Roseobacter denitrificans (strain ATCC 33942 / OCh 114) (Erythrobacter sp. (strain OCh 114))).